The chain runs to 166 residues: Large ribosomal subunit protein bL9 (166 aa).

Belongs to the bacterial ribosomal protein bL9 family.

Binds to the 23S rRNA. In Brachyspira hyodysenteriae (strain ATCC 49526 / WA1), this protein is Large ribosomal subunit protein bL9.